We begin with the raw amino-acid sequence, 422 residues long: Histidine--tRNA ligase (422 aa).

The protein belongs to the class-II aminoacyl-tRNA synthetase family. In terms of assembly, homodimer.

The protein resides in the cytoplasm. It carries out the reaction tRNA(His) + L-histidine + ATP = L-histidyl-tRNA(His) + AMP + diphosphate + H(+). The polypeptide is Histidine--tRNA ligase (Mycolicibacterium vanbaalenii (strain DSM 7251 / JCM 13017 / BCRC 16820 / KCTC 9966 / NRRL B-24157 / PYR-1) (Mycobacterium vanbaalenii)).